Here is a 356-residue protein sequence, read N- to C-terminus: 3-isopropylmalate dehydrogenase (356 aa).

R91, R101, R129, and D223 together coordinate substrate. Residues D223, D247, and D251 each contribute to the Mg(2+) site. Residue 281 to 293 (GSAPDIAGKGIAN) coordinates NAD(+).

It belongs to the isocitrate and isopropylmalate dehydrogenases family. LeuB type 1 subfamily. Homodimer. The cofactor is Mg(2+). It depends on Mn(2+) as a cofactor.

It localises to the cytoplasm. The enzyme catalyses (2R,3S)-3-isopropylmalate + NAD(+) = 4-methyl-2-oxopentanoate + CO2 + NADH. Its pathway is amino-acid biosynthesis; L-leucine biosynthesis; L-leucine from 3-methyl-2-oxobutanoate: step 3/4. Its function is as follows. Catalyzes the oxidation of 3-carboxy-2-hydroxy-4-methylpentanoate (3-isopropylmalate) to 3-carboxy-4-methyl-2-oxopentanoate. The product decarboxylates to 4-methyl-2 oxopentanoate. In Ralstonia nicotianae (strain ATCC BAA-1114 / GMI1000) (Ralstonia solanacearum), this protein is 3-isopropylmalate dehydrogenase.